The primary structure comprises 148 residues: uncharacterized protein (148 aa).

The N-acetyltransferase domain maps to 1-144; it reads MNIKRITTEA…PHVLMTKEIS (144 aa).

This is an uncharacterized protein from Bacillus subtilis (strain 168).